Consider the following 1506-residue polypeptide: Condensin-2 complex subunit D3 (1506 aa).

The tract at residues 154–194 (SNLTQKRKKDHSKSSKDNYRKSRKRGKPPRKEDYQVDELSR) is disordered. HEAT repeat units lie at residues 442–476 (HKFFVQEIIFDRCLDKAPTVRSKALSSFAHCLELS), 532–567 (PGERCFMTMLRKRIKDEKINVRKSALQVLMSILKHC), and 574–605 (QDLLILQDHCRDPAISVRKQALQSLTELVMAQ). Residue Ser-562 is modified to Phosphoserine. Positions 884–897 (SDHLPSSQGTTDAL) are enriched in polar residues. A disordered region spans residues 884-908 (SDHLPSSQGTTDALDSQPPFQPRSS). Residues 968 to 1004 (TVMVDNYIPNISVCLKDSDPFIRKQTLVLLTNLLQEE) form an HEAT 4 repeat. A coiled-coil region spans residues 1213 to 1270 (ALRELMNYLREVMQDYRDEINDFFAVDKQLASELEYDMKKYNEQLAQEQALTEHANAT). The disordered stretch occupies residues 1317-1353 (QDNADVPPTQSRPSAPRSNFTPTLPPISENGPLKIMS). A compositionally biased stretch (polar residues) spans 1324-1338 (PTQSRPSAPRSNFTP). Phosphoserine is present on residues Ser-1359, Ser-1368, Ser-1381, and Ser-1393. 2 disordered regions span residues 1385–1412 (LPFNVETGSPENPSSHESSLSLEKESDR) and 1473–1506 (PQSPQWNVKSPARSHGSTRSSRRSLRKAPLKTAN). The segment covering 1393 to 1405 (SPENPSSHESSLS) has biased composition (low complexity). A compositionally biased stretch (basic residues) spans 1492–1506 (SSRRSLRKAPLKTAN).

As to quaternary structure, component of the condensin-2 complex, which contains the SMC2 and SMC4 heterodimer, and 3 non SMC subunits that probably regulate the complex: NCAPH2, NCAPD3 and NCAPG2.

The protein localises to the nucleus. Functionally, regulatory subunit of the condensin-2 complex, a complex which establishes mitotic chromosome architecture and is involved in physical rigidity of the chromatid axis. May promote the resolution of double-strand DNA catenanes (intertwines) between sister chromatids. Condensin-mediated compaction likely increases tension in catenated sister chromatids, providing directionality for type II topoisomerase-mediated strand exchanges toward chromatid decatenation. Specifically required for decatenation of centromeric ultrafine DNA bridges during anaphase. Early in neurogenesis, may play an essential role to ensure accurate mitotic chromosome condensation in neuron stem cells, ultimately affecting neuron pool and cortex size. This Mus musculus (Mouse) protein is Condensin-2 complex subunit D3 (Ncapd3).